We begin with the raw amino-acid sequence, 132 residues long: Peptide methionine sulfoxide reductase MsrB (132 aa).

The region spanning 8–130 (LDSWREELTE…NSASLKLVPR (123 aa)) is the MsrB domain. 4 residues coordinate Zn(2+): cysteine 47, cysteine 50, cysteine 96, and cysteine 99. The active-site Nucleophile is the cysteine 119.

The protein belongs to the MsrB Met sulfoxide reductase family. It depends on Zn(2+) as a cofactor.

It carries out the reaction L-methionyl-[protein] + [thioredoxin]-disulfide + H2O = L-methionyl-(R)-S-oxide-[protein] + [thioredoxin]-dithiol. In Pseudomonas aeruginosa (strain UCBPP-PA14), this protein is Peptide methionine sulfoxide reductase MsrB.